We begin with the raw amino-acid sequence, 430 residues long: Na(+)/H(+) antiporter NhaA 2 (430 aa).

10 helical membrane passes run 11 to 31 (FVHGESFAGLLLVGTALIAFI), 60 to 80 (LSLEHWVNDGLMAVFFLLVGL), 97 to 117 (VALAVTAALGGMLVPAALYTA), 127 to 147 (GWGVPMSTDIAFALGVLALLG), 181 to 201 (LNLTFLTLAALTWGAALYAGW), 215 to 235 (VLLWFFVLKSGLHATIAGVLL), 288 to 308 (HALHPFVTFLVLPVFALTNAG), 309 to 329 (VPVAAGGFGSVSLGVLLGLLL), 356 to 376 (WGHMVGSGLLAGIGFTMSLFV), and 393 to 413 (GVLLASVLAALLGAGWLLLGI).

It belongs to the NhaA Na(+)/H(+) (TC 2.A.33) antiporter family.

It localises to the cell membrane. It catalyses the reaction Na(+)(in) + 2 H(+)(out) = Na(+)(out) + 2 H(+)(in). Na(+)/H(+) antiporter that extrudes sodium in exchange for external protons. The polypeptide is Na(+)/H(+) antiporter NhaA 2 (Deinococcus geothermalis (strain DSM 11300 / CIP 105573 / AG-3a)).